We begin with the raw amino-acid sequence, 809 residues long: Pentatricopeptide repeat-containing protein At1g11290, chloroplastic (809 aa).

Residues 1–46 constitute a chloroplast transit peptide; it reads MSSQLVQFSTVPQIPNPPSRHRHFLSERNYIPANVYEHPAALLLER. PPR repeat units follow at residues 68-98, 99-133, 134-168, 169-199, 200-234, 235-269, 270-300, 301-335, 336-370, 371-401, 402-436, 437-471, 472-502, 503-537, 538-568, and 574-604; these read EHFF…IDSK, LNVL…DVEP, VVYN…GFSL, DLFA…MPER, DLVS…NLKP, SFIT…GFDS, LVNI…MLER, NVVS…GVKP, TDVS…GLDR, NVSV…LQSR, TLVS…TVKP, DTFT…CLDK, NVFV…MSER, HVTT…TIKP, NGVT…MKEN, and SMDH…MPVK. Residues 609–684 are type E motif; it reads VYGAMLGACQ…TPGCSMVEIK (76 aa). The interval 685–715 is type E(+) motif; the sequence is NEVHSFFSGSTAHPDSKKIYAFLEKLICHIK. The interval 716 to 809 is type DYW motif; the sequence is EAGYVPDTNL…NGACSCGDYW (94 aa).

The protein belongs to the PPR family. PCMP-H subfamily.

It is found in the plastid. It localises to the chloroplast. In terms of biological role, involved in multiple sites RNA editing events in chloroplasts. Involved in the editing of the site 7 of ndhB (ndhB-7) and site 5 of ndhD (ndhD-5) transcripts, which are two plastid-encoded subunits of the chloroplast NAD(P)H dehydrogenase (NDH) complex. Involved in the editing of the site 3 of rpoB (rpoB-3) transcript. Required for the activity of the NDH complex of the photosynthetic electron transport chain. Possesses low endoribonuclease activity in vitro. The polypeptide is Pentatricopeptide repeat-containing protein At1g11290, chloroplastic (PCMP-H40) (Arabidopsis thaliana (Mouse-ear cress)).